The sequence spans 144 residues: Small ribosomal subunit protein bS6 (144 aa).

The tract at residues 92–144 is disordered; that stretch reads KVDGHDEGPSVQMQKRDDRGDREERGDRGDRGDRGPRGDRGPREDRGPRPERR. Residues 93 to 144 are compositionally biased toward basic and acidic residues; that stretch reads VDGHDEGPSVQMQKRDDRGDREERGDRGDRGDRGPRGDRGPREDRGPRPERR.

It belongs to the bacterial ribosomal protein bS6 family.

Functionally, binds together with bS18 to 16S ribosomal RNA. This is Small ribosomal subunit protein bS6 (rpsF) from Rhodobacter capsulatus (strain ATCC BAA-309 / NBRC 16581 / SB1003).